The sequence spans 232 residues: EEF1A lysine methyltransferase 3 (232 aa).

Residues tryptophan 57, 83–85, aspartate 104, tryptophan 133, and alanine 150 each bind S-adenosyl-L-methionine; that span reads GAG.

This sequence belongs to the methyltransferase superfamily. METTL21 family. As to quaternary structure, interacts with members of the heat shock protein 70 and 90 families and of the TCP-1 chaperonin family, as well as with HSPD1, STIP1 and tubulin; at least some of these proteins may be methylation substrates.

The protein localises to the cytoplasm. It localises to the cytoskeleton. It is found in the microtubule organizing center. Its subcellular location is the centrosome. The enzyme catalyses L-lysyl-[protein] + 3 S-adenosyl-L-methionine = N(6),N(6),N(6)-trimethyl-L-lysyl-[protein] + 3 S-adenosyl-L-homocysteine + 3 H(+). It carries out the reaction L-lysyl-[protein] + S-adenosyl-L-methionine = N(6)-methyl-L-lysyl-[protein] + S-adenosyl-L-homocysteine + H(+). It catalyses the reaction N(6)-methyl-L-lysyl-[protein] + S-adenosyl-L-methionine = N(6),N(6)-dimethyl-L-lysyl-[protein] + S-adenosyl-L-homocysteine + H(+). The catalysed reaction is N(6),N(6)-dimethyl-L-lysyl-[protein] + S-adenosyl-L-methionine = N(6),N(6),N(6)-trimethyl-L-lysyl-[protein] + S-adenosyl-L-homocysteine + H(+). Protein-lysine methyltransferase that selectively mono-, di- and trimethylates 'Lys-165' of the translation elongation factors EEF1A1 and EEF1A2 in an aminoacyl-tRNA and GTP-dependent manner. EEF1A1 methylation by EEF1AKMT3 is dynamic as well as inducible by stress conditions, such as ER-stress, and plays a regulatory role on mRNA translation. The chain is EEF1A lysine methyltransferase 3 from Mus musculus (Mouse).